The chain runs to 110 residues: Large ribosomal subunit protein uL22 (110 aa).

This sequence belongs to the universal ribosomal protein uL22 family. As to quaternary structure, part of the 50S ribosomal subunit.

Its function is as follows. This protein binds specifically to 23S rRNA; its binding is stimulated by other ribosomal proteins, e.g. L4, L17, and L20. It is important during the early stages of 50S assembly. It makes multiple contacts with different domains of the 23S rRNA in the assembled 50S subunit and ribosome. In terms of biological role, the globular domain of the protein is located near the polypeptide exit tunnel on the outside of the subunit, while an extended beta-hairpin is found that lines the wall of the exit tunnel in the center of the 70S ribosome. The sequence is that of Large ribosomal subunit protein uL22 from Pseudoalteromonas atlantica (strain T6c / ATCC BAA-1087).